A 283-amino-acid polypeptide reads, in one-letter code: Polyamine aminopropyltransferase (283 aa).

Positions 5–240 (NTWFTEIHQD…GWWTATMACK (236 aa)) constitute a PABS domain. Glutamine 33 is an S-methyl-5'-thioadenosine binding site. Histidine 64 and aspartate 88 together coordinate spermidine. S-methyl-5'-thioadenosine-binding positions include aspartate 108 and 139–140 (DG). Aspartate 158 functions as the Proton acceptor in the catalytic mechanism. A spermidine-binding site is contributed by 158–161 (DSTD). Proline 165 is a binding site for S-methyl-5'-thioadenosine.

This sequence belongs to the spermidine/spermine synthase family. As to quaternary structure, homodimer or homotetramer.

The protein resides in the cytoplasm. The enzyme catalyses S-adenosyl 3-(methylsulfanyl)propylamine + putrescine = S-methyl-5'-thioadenosine + spermidine + H(+). The protein operates within amine and polyamine biosynthesis; spermidine biosynthesis; spermidine from putrescine: step 1/1. Its function is as follows. Catalyzes the irreversible transfer of a propylamine group from the amino donor S-adenosylmethioninamine (decarboxy-AdoMet) to putrescine (1,4-diaminobutane) to yield spermidine. This chain is Polyamine aminopropyltransferase, found in Thioalkalivibrio sulfidiphilus (strain HL-EbGR7).